The chain runs to 169 residues: Crossover junction endodeoxyribonuclease RuvC (169 aa).

Active-site residues include aspartate 15, glutamate 75, and aspartate 147. 3 residues coordinate Mg(2+): aspartate 15, glutamate 75, and aspartate 147.

The protein belongs to the RuvC family. As to quaternary structure, homodimer which binds Holliday junction (HJ) DNA. The HJ becomes 2-fold symmetrical on binding to RuvC with unstacked arms; it has a different conformation from HJ DNA in complex with RuvA. In the full resolvosome a probable DNA-RuvA(4)-RuvB(12)-RuvC(2) complex forms which resolves the HJ. Mg(2+) serves as cofactor.

The protein resides in the cytoplasm. It carries out the reaction Endonucleolytic cleavage at a junction such as a reciprocal single-stranded crossover between two homologous DNA duplexes (Holliday junction).. In terms of biological role, the RuvA-RuvB-RuvC complex processes Holliday junction (HJ) DNA during genetic recombination and DNA repair. Endonuclease that resolves HJ intermediates. Cleaves cruciform DNA by making single-stranded nicks across the HJ at symmetrical positions within the homologous arms, yielding a 5'-phosphate and a 3'-hydroxyl group; requires a central core of homology in the junction. The consensus cleavage sequence is 5'-(A/T)TT(C/G)-3'. Cleavage occurs on the 3'-side of the TT dinucleotide at the point of strand exchange. HJ branch migration catalyzed by RuvA-RuvB allows RuvC to scan DNA until it finds its consensus sequence, where it cleaves and resolves the cruciform DNA. This Caulobacter vibrioides (strain ATCC 19089 / CIP 103742 / CB 15) (Caulobacter crescentus) protein is Crossover junction endodeoxyribonuclease RuvC.